Reading from the N-terminus, the 374-residue chain is Probable quinol oxidase subunit 2 (374 aa).

An N-terminal signal peptide occupies residues 1 to 19 (MSKFKSLLLMFGTLILLSG). Residue Cys-20 is the site of N-palmitoyl cysteine attachment. The S-diacylglycerol cysteine moiety is linked to residue Cys-20. The next 2 membrane-spanning stretches (helical) occupy residues 43 to 63 (SIIF…IFIF) and 82 to 102 (IETI…IPTV). Residues 321 to 374 (MKPMILGNNDPYDNEFKKEEDHNSKEMEKISKSAKDENASKFGSKADNDHGGGH) form a disordered region. Basic and acidic residues predominate over residues 334 to 374 (NEFKKEEDHNSKEMEKISKSAKDENASKFGSKADNDHGGGH).

It belongs to the cytochrome c oxidase subunit 2 family.

The protein localises to the cell membrane. The enzyme catalyses 2 a quinol + O2 = 2 a quinone + 2 H2O. In terms of biological role, catalyzes quinol oxidation with the concomitant reduction of oxygen to water. Subunit II transfers the electrons from a quinol to the binuclear center of the catalytic subunit I. This chain is Probable quinol oxidase subunit 2 (qoxA), found in Staphylococcus haemolyticus (strain JCSC1435).